Consider the following 371-residue polypeptide: N-acetyldiaminopimelate deacetylase (371 aa).

Asp68 is an active-site residue. Residue Glu127 is the Proton acceptor of the active site.

Belongs to the peptidase M20A family. N-acetyldiaminopimelate deacetylase subfamily.

It catalyses the reaction N-acetyl-(2S,6S)-2,6-diaminopimelate + H2O = (2S,6S)-2,6-diaminopimelate + acetate. It participates in amino-acid biosynthesis; L-lysine biosynthesis via DAP pathway; LL-2,6-diaminopimelate from (S)-tetrahydrodipicolinate (acetylase route): step 3/3. In terms of biological role, catalyzes the conversion of N-acetyl-diaminopimelate to diaminopimelate and acetate. This chain is N-acetyldiaminopimelate deacetylase, found in Listeria monocytogenes serotype 4b (strain CLIP80459).